A 230-amino-acid polypeptide reads, in one-letter code: Orotidine 5'-phosphate decarboxylase (230 aa).

Substrate-binding positions include Asp-10, Lys-32, 59 to 68, Thr-119, Arg-180, Gln-189, Gly-209, and Arg-210; that span reads DLKYHDIPNT. Lys-61 serves as the catalytic Proton donor.

The protein belongs to the OMP decarboxylase family. Type 1 subfamily. As to quaternary structure, homodimer.

The catalysed reaction is orotidine 5'-phosphate + H(+) = UMP + CO2. It functions in the pathway pyrimidine metabolism; UMP biosynthesis via de novo pathway; UMP from orotate: step 2/2. Catalyzes the decarboxylation of orotidine 5'-monophosphate (OMP) to uridine 5'-monophosphate (UMP). The chain is Orotidine 5'-phosphate decarboxylase from Haemophilus influenzae (strain 86-028NP).